Reading from the N-terminus, the 572-residue chain is MSHAAEPARDAVEASAEGPRAVFLLLEERRPAESAQLLSLNSLLPESGIVADIELENILDPDSFYELKSQPLFLRSSLPISLQATPTTPATLSASSSAGGSRTPAMSSSSSRVLLRQQLMRAQAQEQERRERREQAAAAPFPSPAPASPAISVIGVSAGGHTLSRPPPAQVPREVLKVQTHLENPTRYHLQQARRQQVKQYLSTTLGPKLASQALTPPPGPSSAQPLPAPETAHATGPTGSAPNSPMALLTIGSSSEKEIDDVIDEIISLESSYNDEMLSYLPGGTAGLQLPSTLPVSGNLLDVYSSQGVATPAITVSNSCPAELPNIKREISETEAKALLKERQKKDNHNLIERRRRFNINDRIKELGTLIPKSNDPEMRWNKGTILKASVDYIRKLQKEQQRSKDLESRQRSLEQANRSLQLRIQELELQAQIHGLPVPPNPGLLSLTTSSVSDSLKPEQLDIEEEGRPSTTFHVSGGPAQNAPPQQPPAPPSDALLDLHFPSDHLGDLGDPFHLGLEDILMEEEGMVGGLSGGALSPLRAASDPLLSSVSPAVSKASSRRSSFSMEEES.

A Phosphoserine; by MTOR modification is found at Ser-47. The segment covering 87-125 (TTPATLSASSSAGGSRTPAMSSSSSRVLLRQQLMRAQAQ) has biased composition (low complexity). The interval 87 to 152 (TTPATLSASS…SPAPASPAIS (66 aa)) is disordered. Positions 126 to 135 (EQERRERREQ) are enriched in basic and acidic residues. Position 187 is an asymmetric dimethylarginine (Arg-187). Residues 210–248 (LASQALTPPPGPSSAQPLPAPETAHATGPTGSAPNSPMA) are disordered. Positions 259-270 (EIDDVIDEIISL) are strong transcription activation domain. Ser-320 carries the post-translational modification Phosphoserine; by MTOR. Lys-338 participates in a covalent cross-link: Glycyl lysine isopeptide (Lys-Gly) (interchain with G-Cter in SUMO2). A bHLH domain is found at 345–398 (QKKDNHNLIERRRRFNINDRIKELGTLIPKSNDPEMRWNKGTILKASVDYIRKL). The Nuclear localization signal motif lies at 355–358 (RRRR). Positions 408 to 429 (LESRQRSLEQANRSLQLRIQEL) are leucine-zipper. Disordered stretches follow at residues 439-495 (PVPP…APPS) and 530-572 (VGGL…EEES). Positions 446–457 (LLSLTTSSVSDS) are enriched in low complexity. Phosphoserine is present on residues Ser-539, Ser-545, Ser-551, Ser-553, Ser-557, and Ser-565. The segment covering 543–572 (AASDPLLSSVSPAVSKASSRRSSFSMEEES) has biased composition (low complexity).

It belongs to the MiT/TFE family. Homodimer and heterodimer; with TFEB or MITF. Interacts with RRAGC/RagC GDP-bound and RRAGD/RagD GDP-bound; promoting its recruitment to lysosomal membrane in the presence of nutrients. Interacts with TSC22D1; the interaction is enhanced in the presence of TGF-beta. In terms of processing, sumoylated; does not affect dimerization with MITF. Post-translationally, phosphorylation ar Ser-47 and Ser-320 by MTOR via non-canonical mTORC1 pathway regulates its stability and subcellular location, respectively. When nutrients are present, phosphorylation by MTOR at Ser-47 promotes ubiquitination by the SCF(BTRC) complex, followed by degradation. When nutrients are present, phosphorylation by MTOR at Ser-320 also promotes association with 14-3-3/YWHA adapters and retention in the cytosol. Phosphorylation at Ser-47 plays a more critical role than phosphorylation at Ser-320 for TFE3 inactivation. Inhibition of mTORC1, starvation and lysosomal disruption, promotes dephosphorylation and transcription factor activity. Ubiquitinated by the SCF(BTRC) and SCF(FBXW11) complexes following phosphorylation at Ser-47 by MTOR, leading to its degradation by the proteasome. Widely expressed.

Its subcellular location is the cytoplasm. It is found in the cytosol. The protein resides in the nucleus. The protein localises to the lysosome membrane. In terms of biological role, transcription factor that acts as a master regulator of lysosomal biogenesis and immune response. Specifically recognizes and binds E-box sequences (5'-CANNTG-3'); efficient DNA-binding requires dimerization with itself or with another MiT/TFE family member such as TFEB or MITF. Involved in the cellular response to amino acid availability by acting downstream of MTOR: in the presence of nutrients, TFE3 phosphorylation by MTOR promotes its inactivation. Upon starvation or lysosomal stress, inhibition of MTOR induces TFE3 dephosphorylation, resulting in transcription factor activity. Specifically recognizes and binds the CLEAR-box sequence (5'-GTCACGTGAC-3') present in the regulatory region of many lysosomal genes, leading to activate their expression, thereby playing a central role in expression of lysosomal genes. Maintains the pluripotent state of embryonic stem cells by promoting the expression of genes such as ESRRB; mTOR-dependent TFE3 cytosolic retention and inactivation promotes exit from pluripotency. Required to maintain the naive pluripotent state of hematopoietic stem cell; mTOR-dependent cytoplasmic retention of TFE3 promotes the exit of hematopoietic stem cell from pluripotency. TFE3 activity is also involved in the inhibition of neuronal progenitor differentiation. Acts as a positive regulator of browning of adipose tissue by promoting expression of target genes; mTOR-dependent phosphorylation promotes cytoplasmic retention of TFE3 and inhibits browning of adipose tissue. In association with TFEB, activates the expression of CD40L in T-cells, thereby playing a role in T-cell-dependent antibody responses in activated CD4(+) T-cells and thymus-dependent humoral immunity. Specifically recognizes the MUE3 box, a subset of E-boxes, present in the immunoglobulin enhancer. It also binds very well to a USF/MLTF site. Promotes TGF-beta-induced transcription of COL1A2; via its interaction with TSC22D1 at E-boxes in the gene proximal promoter. May regulate lysosomal positioning in response to nutrient deprivation by promoting the expression of PIP4P1. This Mus musculus (Mouse) protein is Transcription factor E3.